Reading from the N-terminus, the 149-residue chain is MGLEKSFILFSLLVLVLGWVQPSLGKESSAQKFNRQHMDTEGSSNSSPTYCNQMMTPRGMTKGSCKPVNTFVHETLADVQAICSQGQVTCKNGKSNCYKSSCALHITDCRLKGNSKYPNCDYKTSDYQKHIIIACEGNPSVPVHFDASE.

Positions 1-25 (MGLEKSFILFSLLVLVLGWVQPSLG) are cleaved as a signal peptide. Lys-32 and Arg-35 together coordinate substrate. His-37 serves as the catalytic Proton acceptor. 4 cysteine pairs are disulfide-bonded: Cys-51–Cys-109, Cys-65–Cys-120, Cys-83–Cys-135, and Cys-90–Cys-97. Substrate is bound by residues 66–70 (KPVNT), Lys-91, and Arg-110. His-144 (proton donor) is an active-site residue.

It belongs to the pancreatic ribonuclease family. As to quaternary structure, monomer. Interacts with and forms tight 1:1 complexes with RNH1. Dimerization of two such complexes may occur. Interaction with RNH1 inhibits this protein. In terms of tissue distribution, pancreas.

Its subcellular location is the secreted. It catalyses the reaction an [RNA] containing cytidine + H2O = an [RNA]-3'-cytidine-3'-phosphate + a 5'-hydroxy-ribonucleotide-3'-[RNA].. The catalysed reaction is an [RNA] containing uridine + H2O = an [RNA]-3'-uridine-3'-phosphate + a 5'-hydroxy-ribonucleotide-3'-[RNA].. In terms of biological role, endonuclease that catalyzes the cleavage of RNA on the 3' side of pyrimidine nucleotides. Acts on single-stranded and double-stranded RNA. The chain is Ribonuclease pancreatic (RNASE1) from Leopoldamys edwardsi (Edwards's long-tailed giant rat).